The chain runs to 424 residues: CinA-like protein (424 aa).

Belongs to the CinA family.

The protein is CinA-like protein of Shewanella baltica (strain OS195).